We begin with the raw amino-acid sequence, 408 residues long: LysM domain-containing protein ARB_01488 (408 aa).

The signal sequence occupies residues 1–17; it reads MVKYALLPLVAVSLVQA. The 50-residue stretch at 42-91 folds into the LysM 1 domain; sequence SWINVVDASGKLTCDAFLDTINVAKRQFIFWNPQLNSDCSNIQSKASYCA. The interval 98–178 is disordered; the sequence is SKQTRGQMDP…HGPKEAPPPD (81 aa). Pro residues predominate over residues 106 to 116; the sequence is DPPPKTKPLPP. LysM domains are found at residues 270–320 and 360–406; these read QYHT…RVCV and SFEL…YACV.

The protein resides in the secreted. Its function is as follows. Might have a role in sequestration of chitin oligosaccharides (breakdown products of fungal cell walls that are released during invasion and act as triggers of host immunity) to dampen host defense. In Arthroderma benhamiae (strain ATCC MYA-4681 / CBS 112371) (Trichophyton mentagrophytes), this protein is LysM domain-containing protein ARB_01488.